The chain runs to 61 residues: Small ribosomal subunit protein uS14 (61 aa).

Zn(2+)-binding residues include Cys24, Cys27, Cys40, and Cys43.

This sequence belongs to the universal ribosomal protein uS14 family. Zinc-binding uS14 subfamily. In terms of assembly, part of the 30S ribosomal subunit. Contacts proteins S3 and S10. Zn(2+) is required as a cofactor.

Functionally, binds 16S rRNA, required for the assembly of 30S particles and may also be responsible for determining the conformation of the 16S rRNA at the A site. The sequence is that of Small ribosomal subunit protein uS14 from Malacoplasma penetrans (strain HF-2) (Mycoplasma penetrans).